The sequence spans 241 residues: Proteasome subunit beta type-6 (241 aa).

A propeptide spanning residues 1 to 19 is cleaved from the precursor; the sequence is MATIASEYSSEASNTPIEH.

It belongs to the peptidase T1B family. As to quaternary structure, the 26S proteasome consists of a 20S proteasome core and two 19S regulatory subunits. The 20S proteasome core is composed of 28 subunits that are arranged in four stacked rings, resulting in a barrel-shaped structure. The two end rings are each formed by seven alpha subunits, and the two central rings are each formed by seven beta subunits. The catalytic chamber with the active sites is on the inside of the barrel.

Its subcellular location is the cytoplasm. It is found in the nucleus. Functionally, non-catalytic component of the proteasome which degrades poly-ubiquitinated proteins in the cytoplasm and in the nucleus. It is essential for the regulated turnover of proteins and for the removal of misfolded proteins. The proteasome is a multicatalytic proteinase complex that is characterized by its ability to cleave peptides with Arg, Phe, Tyr, Leu, and Glu adjacent to the leaving group at neutral or slightly basic pH. It has an ATP-dependent proteolytic activity. This is Proteasome subunit beta type-6 (PRE7) from Saccharomyces cerevisiae (strain ATCC 204508 / S288c) (Baker's yeast).